Reading from the N-terminus, the 815-residue chain is uncharacterized protein (815 aa).

The zn(2)-C6 fungal-type DNA-binding region spans 31–57 (CDMCRRKKIKCDGLRPCKNCKAGKLEC). Residues 560–580 (YWTTVYCGFSTIVTLIFAALL) form a helical membrane-spanning segment. Disordered stretches follow at residues 646-668 (ESNV…SNTQ) and 769-792 (DPDV…FNPT). Over residues 780-792 (SSSLNNSTPFNPT) the composition is skewed to polar residues.

It is found in the cytoplasm. Its subcellular location is the nucleus membrane. This is an uncharacterized protein from Schizosaccharomyces pombe (strain 972 / ATCC 24843) (Fission yeast).